We begin with the raw amino-acid sequence, 298 residues long: Cyclin-dependent kinase 2 (298 aa).

Residue methionine 1 is modified to N-acetylmethionine. A Protein kinase domain is found at 4 to 286; the sequence is FQKVEKIGEG…AKAALAHPFF (283 aa). Position 6 is an N6-acetyllysine (lysine 6). 10–18 provides a ligand contact to ATP; it reads IGEGTYGVV. Residue threonine 14 is modified to Phosphothreonine. Residue tyrosine 15 is modified to Phosphotyrosine; by WEE1. Tyrosine 19 carries the phosphotyrosine modification. Residues lysine 33, 81–83, and aspartate 86 contribute to the ATP site; that span reads ELL. The active-site Proton acceptor is the aspartate 127. Residues 129–132 and aspartate 145 contribute to the ATP site; that span reads KPQN. 2 residues coordinate Mg(2+): asparagine 132 and aspartate 145. Threonine 160 carries the post-translational modification Phosphothreonine; by CAK and CCRK.

Belongs to the protein kinase superfamily. CMGC Ser/Thr protein kinase family. CDC2/CDKX subfamily. As to quaternary structure, found in a complex with CABLES1, CCNA1 and CCNE1. Interacts with CABLES1. Interacts with UHRF2. Part of a complex consisting of UHRF2, CDK2 and CCNE1. Interacts with the Speedy/Ringo proteins SPDYA and SPDYC. Interaction with SPDYA promotes kinase activation via a conformation change that alleviates obstruction of the substrate-binding cleft by the T-loop. Found in a complex with both SPDYA and CDKN1B/KIP1. Binds to RB1 and CDK7. Binding to CDKN1A (p21) leads to CDK2/cyclin E inactivation at the G1-S phase DNA damage checkpoint, thereby arresting cells at the G1-S transition during DNA repair. Associated with PTPN6 and beta-catenin/CTNNB1. Interacts with CACUL1. May interact with CEP63. Interacts with ANKRD17. Interacts with CEBPA (when phosphorylated). Forms a ternary complex with CCNA2 and CDKN1B; CDKN1B inhibits the kinase activity of CDK2 through conformational rearrangements. Interacts with cyclins A, B1, B3, D, or E. Interacts with CDK2AP2. The cofactor is Mg(2+). Phosphorylated at Thr-160 by CDK7 in a CAK complex. Phosphorylation at Thr-160 promotes kinase activity, whereas phosphorylation at Tyr-15 by WEE1 reduces slightly kinase activity. Phosphorylated on Thr-14 and Tyr-15 during S and G2 phases before being dephosphorylated by CDC25A. Post-translationally, nitrosylated after treatment with nitric oxide (DETA-NO).

Its subcellular location is the cytoplasm. It localises to the cytoskeleton. It is found in the microtubule organizing center. The protein localises to the centrosome. The protein resides in the nucleus. Its subcellular location is the cajal body. It localises to the endosome. The enzyme catalyses L-seryl-[protein] + ATP = O-phospho-L-seryl-[protein] + ADP + H(+). It catalyses the reaction L-threonyl-[protein] + ATP = O-phospho-L-threonyl-[protein] + ADP + H(+). Phosphorylation at Thr-14 or Tyr-15 inactivates the enzyme, while phosphorylation at Thr-160 activates it. Stimulated by MYC. Inactivated by CDKN1A (p21). Functionally, serine/threonine-protein kinase involved in the control of the cell cycle; essential for meiosis, but dispensable for mitosis. Phosphorylates CABLES1, CTNNB1, CDK2AP2, ERCC6, NBN, USP37, p53/TP53, NPM1, CDK7, RB1, BRCA2, MYC, NPAT, EZH2. Triggers duplication of centrosomes and DNA. Acts at the G1-S transition to promote the E2F transcriptional program and the initiation of DNA synthesis, and modulates G2 progression; controls the timing of entry into mitosis/meiosis by controlling the subsequent activation of cyclin B/CDK1 by phosphorylation, and coordinates the activation of cyclin B/CDK1 at the centrosome and in the nucleus. Crucial role in orchestrating a fine balance between cellular proliferation, cell death, and DNA repair in embryonic stem cells (ESCs). Activity of CDK2 is maximal during S phase and G2; activated by interaction with cyclin E during the early stages of DNA synthesis to permit G1-S transition, and subsequently activated by cyclin A2 (cyclin A1 in germ cells) during the late stages of DNA replication to drive the transition from S phase to mitosis, the G2 phase. EZH2 phosphorylation promotes H3K27me3 maintenance and epigenetic gene silencing. Cyclin E/CDK2 prevents oxidative stress-mediated Ras-induced senescence by phosphorylating MYC. Involved in G1-S phase DNA damage checkpoint that prevents cells with damaged DNA from initiating mitosis; regulates homologous recombination-dependent repair by phosphorylating BRCA2, this phosphorylation is low in S phase when recombination is active, but increases as cells progress towards mitosis. In response to DNA damage, double-strand break repair by homologous recombination a reduction of CDK2-mediated BRCA2 phosphorylation. Involved in regulation of telomere repair by mediating phosphorylation of NBN. Phosphorylation of RB1 disturbs its interaction with E2F1. NPM1 phosphorylation by cyclin E/CDK2 promotes its dissociation from unduplicated centrosomes, thus initiating centrosome duplication. Cyclin E/CDK2-mediated phosphorylation of NPAT at G1-S transition and until prophase stimulates the NPAT-mediated activation of histone gene transcription during S phase. Required for vitamin D-mediated growth inhibition by being itself inactivated. Involved in the nitric oxide- (NO) mediated signaling in a nitrosylation/activation-dependent manner. USP37 is activated by phosphorylation and thus triggers G1-S transition. CTNNB1 phosphorylation regulates insulin internalization. Phosphorylates FOXP3 and negatively regulates its transcriptional activity and protein stability. Phosphorylates ERCC6 which is essential for its chromatin remodeling activity at DNA double-strand breaks. Acts as a regulator of the phosphatidylinositol 3-kinase/protein kinase B signal transduction by mediating phosphorylation of the C-terminus of protein kinase B (PKB/AKT1 and PKB/AKT2), promoting its activation. The polypeptide is Cyclin-dependent kinase 2 (CDK2) (Mesocricetus auratus (Golden hamster)).